The sequence spans 510 residues: MGLPWYRVHTVLINDPGRLIAAHLMHTALVAGWAGSMALYELATFDPSDPVLNPMWRQGMFVLPFMARLGVTGSWSGWSITGETGIDPGFWSFEGVALAHIVLSGLLFLAACWHWVYWDLELFRDPRTGEPALDLPKMFGIHLFLAGLLCFGFGAFHLTGLFGPGMWVSDPYGLTGSVQPVAPEWGPDGFNPYNPGGVVAHHIAAGIVGIIAGLFHILVRPPQRLYKALRMGNIETVLSSSIAAVFFAAFVVAGTMWYGSATTPIELFGPTRYQWDSSYFQQEINRRVQASLASGATLEEAWSAIPEKLAFYDYIGNNPAKGGLFRTGPMNKGDGIAQAWKGHAVFRNKEGEELFVRRMPAFFESFPVILTDKNGVVKADIPFRRAESKYSFEQQGVTVSFYGGELNGQTFTDPPTVKSYARKAIFGEIFEFDTETLNSDGIFRTSPRGWFTFAHAVFALLFFFGHIWHGARTLFRDVFSGIDPELSPEQVEWGFYQKVGDVTTRRKEAV.

Topologically, residues 2–16 are cytoplasmic; sequence GLPWYRVHTVLINDP. The chain crosses the membrane as a helical span at residues 17-37; the sequence is GRLIAAHLMHTALVAGWAGSM. The Lumenal portion of the chain corresponds to 38–94; that stretch reads ALYELATFDPSDPVLNPMWRQGMFVLPFMARLGVTGSWSGWSITGETGIDPGFWSFE. A helical transmembrane segment spans residues 95–116; the sequence is GVALAHIVLSGLLFLAACWHWV. The Cytoplasmic segment spans residues 117 to 134; the sequence is YWDLELFRDPRTGEPALD. Residues 135-157 form a helical membrane-spanning segment; that stretch reads LPKMFGIHLFLAGLLCFGFGAFH. Residues 158-196 are Lumenal-facing; the sequence is LTGLFGPGMWVSDPYGLTGSVQPVAPEWGPDGFNPYNPG. A helical transmembrane segment spans residues 197-218; sequence GVVAHHIAAGIVGIIAGLFHIL. Topologically, residues 219-233 are cytoplasmic; that stretch reads VRPPQRLYKALRMGN. A helical membrane pass occupies residues 234–254; it reads IETVLSSSIAAVFFAAFVVAG. Residues 255-450 are Lumenal-facing; sequence TMWYGSATTP…GIFRTSPRGW (196 aa). The helical transmembrane segment at 451–473 threads the bilayer; the sequence is FTFAHAVFALLFFFGHIWHGART. Residues 474–510 are Cytoplasmic-facing; that stretch reads LFRDVFSGIDPELSPEQVEWGFYQKVGDVTTRRKEAV.

PSII is composed of 1 copy each of membrane proteins PsbA, PsbB, PsbC, PsbD, PsbE, PsbF, PsbH, PsbI, PsbJ, PsbK, PsbL, PsbM, PsbT, PsbX, PsbY, PsbZ, Psb30/Ycf12, peripheral proteins PsbO, CyanoQ (PsbQ), PsbU, PsbV and a large number of cofactors. It forms dimeric complexes. Part of a photosystem II (PSII) assembly intermediate complex PSII-I; crystallized from a strain deleted of psbJ, it forms monomeric PSII before addition of the oxygen evolving complex. PSII-I includes 3 assembly factors not found in mature PSII (Psb27, Psb28 and Psb34). Binds multiple chlorophylls. PSII binds additional chlorophylls, carotenoids and specific lipids. serves as cofactor.

The protein resides in the cellular thylakoid membrane. In terms of biological role, one of the components of the core complex of photosystem II (PSII). It binds chlorophyll and helps catalyze the primary light-induced photochemical processes of PSII. PSII is a light-driven water:plastoquinone oxidoreductase, using light energy to abstract electrons from H(2)O, generating O(2) and a proton gradient subsequently used for ATP formation. The protein is Photosystem II CP47 reaction center protein of Thermosynechococcus vestitus (strain NIES-2133 / IAM M-273 / BP-1).